The chain runs to 164 residues: Protein-export protein SecB (164 aa).

This sequence belongs to the SecB family. As to quaternary structure, homotetramer, a dimer of dimers. One homotetramer interacts with 1 SecA dimer.

It localises to the cytoplasm. One of the proteins required for the normal export of preproteins out of the cell cytoplasm. It is a molecular chaperone that binds to a subset of precursor proteins, maintaining them in a translocation-competent state. It also specifically binds to its receptor SecA. The protein is Protein-export protein SecB of Herminiimonas arsenicoxydans.